The sequence spans 1034 residues: DNA polymerase I B, chloroplastic/mitochondrial (1034 aa).

Residues Met1 to Asp55 constitute a chloroplast and mitochondrion transit peptide. Residues Ala270–Gln468 enclose the 3'-5' exonuclease domain. The polymerase stretch occupies residues His700–Trp1030.

The protein belongs to the DNA polymerase type-A family. Expressed in shoot apical meristem.

The protein resides in the mitochondrion. Its subcellular location is the plastid. The protein localises to the chloroplast. It catalyses the reaction DNA(n) + a 2'-deoxyribonucleoside 5'-triphosphate = DNA(n+1) + diphosphate. With respect to regulation, not inhibited by aphidicolin. In addition to polymerase activity, this DNA polymerase exhibits 5'-3' exonuclease activity. Required for DNA replication and accumulation in plastids and mitochondria. The sequence is that of DNA polymerase I B, chloroplastic/mitochondrial (POLIB) from Arabidopsis thaliana (Mouse-ear cress).